A 204-amino-acid chain; its full sequence is ATP-dependent Clp protease proteolytic subunit (204 aa).

Residue serine 102 is the Nucleophile of the active site. Histidine 127 is an active-site residue.

It belongs to the peptidase S14 family. Fourteen ClpP subunits assemble into 2 heptameric rings which stack back to back to give a disk-like structure with a central cavity, resembling the structure of eukaryotic proteasomes.

It is found in the cytoplasm. The catalysed reaction is Hydrolysis of proteins to small peptides in the presence of ATP and magnesium. alpha-casein is the usual test substrate. In the absence of ATP, only oligopeptides shorter than five residues are hydrolyzed (such as succinyl-Leu-Tyr-|-NHMec, and Leu-Tyr-Leu-|-Tyr-Trp, in which cleavage of the -Tyr-|-Leu- and -Tyr-|-Trp bonds also occurs).. Cleaves peptides in various proteins in a process that requires ATP hydrolysis. Has a chymotrypsin-like activity. Plays a major role in the degradation of misfolded proteins. The protein is ATP-dependent Clp protease proteolytic subunit of Neisseria gonorrhoeae (strain ATCC 700825 / FA 1090).